The sequence spans 331 residues: Phosphoribosylformylglycinamidine cyclo-ligase (331 aa).

This sequence belongs to the AIR synthase family.

It localises to the cytoplasm. The enzyme catalyses 2-formamido-N(1)-(5-O-phospho-beta-D-ribosyl)acetamidine + ATP = 5-amino-1-(5-phospho-beta-D-ribosyl)imidazole + ADP + phosphate + H(+). Its pathway is purine metabolism; IMP biosynthesis via de novo pathway; 5-amino-1-(5-phospho-D-ribosyl)imidazole from N(2)-formyl-N(1)-(5-phospho-D-ribosyl)glycinamide: step 2/2. In Clostridium botulinum (strain 657 / Type Ba4), this protein is Phosphoribosylformylglycinamidine cyclo-ligase.